We begin with the raw amino-acid sequence, 78 residues long: Protein SlyX homolog (78 aa).

Belongs to the SlyX family.

The protein is Protein SlyX homolog of Xanthomonas oryzae pv. oryzae (strain MAFF 311018).